Here is a 508-residue protein sequence, read N- to C-terminus: MADNPVLEQLLRRLEVADGGLDSAELATQLGVEHQAVVGAVKSLQALGEVIEAELRSTKCWELTTEGEEIAREGSHEARVFRSIPLEGLVQSELMQLPSGKVGFSKAMSNKWIRVDKSAADGPRVFRVVDSIEDEVQRRLQQVQAGQAEKLAEKERNELRKRKLLTEVILKTYWVSKGKGFSTSVSKQEAELSPEMISSGSWRDRPFKPYNFSARGVLPDSGHLHPLLKVRSQFRQIFLEMGFTEMPTDNFIESSFWNFDALFQPQQHPARDQHDTFFLRDPAEALQLPMDYVQRVKRTHSQGGYGSQGYKYTWKLEEARKNLLRTHTTAASARALYRLAQKKPFTPAKYFSIDRVFRNETLDATHLAEFHQIEGVIADHGLTLGHLMGVLREFFTKLGITQLRFKPAYNPYTEPSMEVFSYHQGLKKWVEVGNSGVFRPEMLLPMGLPENVSVIAWGLSLERPTMIKYGINNIRELVGHKVNLQMVYDSPVCRLDIEPRSSKTQEAA.

The residue at position 2 (A2) is an N-acetylalanine. Phosphoserine is present on residues S193 and S301. K311 bears the N6-acetyllysine mark. L-phenylalanine contacts are provided by residues T329, 372-374 (QIE), and Y412. E414 lines the Mg(2+) pocket. F438 contributes to the L-phenylalanine binding site.

Belongs to the class-II aminoacyl-tRNA synthetase family. Phe-tRNA synthetase alpha subunit type 2 subfamily. In terms of assembly, heterotetramer; dimer of two heterodimers formed by FARSA and FARSB. Mg(2+) is required as a cofactor.

It is found in the cytoplasm. The enzyme catalyses tRNA(Phe) + L-phenylalanine + ATP = L-phenylalanyl-tRNA(Phe) + AMP + diphosphate + H(+). In Rattus norvegicus (Rat), this protein is Phenylalanine--tRNA ligase alpha subunit (Farsa).